Reading from the N-terminus, the 318-residue chain is Taste receptor type 2 member 7 (318 aa).

Over 1-9 (MTDKVQTTL) the chain is Extracellular. Residues 10 to 30 (LFLAVGEFSVGILGNAFIGLV) form a helical membrane-spanning segment. Topologically, residues 31–55 (NCMDWIKKRKIASIDLILTSLAISR) are cytoplasmic. A helical membrane pass occupies residues 56–76 (ICLLCVILLDCFILVLYPDVY). Over 77–94 (ATGKEMRIIDFFWILTNH) the chain is Extracellular. Residues 95-115 (LSIWFATCLSIYYFFKIANFF) form a helical membrane-spanning segment. The Cytoplasmic segment spans residues 116 to 128 (HPLFLWMKWRIDR). The chain crosses the membrane as a helical span at residues 129–149 (VISWILLGCMVLSVFISLPAT). Residues 150 to 187 (ENLNADFRFCVKAKRKTNLTWSCRVNKTQHASIKLLLN) are Extracellular-facing. N-linked (GlcNAc...) asparagine glycans are attached at residues asparagine 167 and asparagine 175. Residues 188–208 (LATLLPFCVCLMSFFLLILSL) form a helical membrane-spanning segment. Residues 209–235 (RRHIRRMQLSATGCRDPSTEAHVRALK) lie on the Cytoplasmic side of the membrane. A helical transmembrane segment spans residues 236-256 (AVISFLLLFIAYYLSFLIATS). The Extracellular portion of the chain corresponds to 257 to 266 (SYFMPETELA). Residues 267-287 (VIFGESIALIYPSSHSFILIL) traverse the membrane as a helical segment. Residues 288–318 (GNNKLRHASLKVIWKVMSILKGRKFQQHKQI) lie on the Cytoplasmic side of the membrane.

The protein belongs to the G-protein coupled receptor T2R family.

It is found in the membrane. Gustducin-coupled receptor implicated in the perception of bitter compounds in the oral cavity and the gastrointestinal tract. Signals through PLCB2 and the calcium-regulated cation channel TRPM5. The protein is Taste receptor type 2 member 7 (TAS2R7) of Pongo pygmaeus (Bornean orangutan).